The chain runs to 204 residues: 3-isopropylmalate dehydratase small subunit (204 aa).

It belongs to the LeuD family. LeuD type 1 subfamily. Heterodimer of LeuC and LeuD.

It carries out the reaction (2R,3S)-3-isopropylmalate = (2S)-2-isopropylmalate. Its pathway is amino-acid biosynthesis; L-leucine biosynthesis; L-leucine from 3-methyl-2-oxobutanoate: step 2/4. In terms of biological role, catalyzes the isomerization between 2-isopropylmalate and 3-isopropylmalate, via the formation of 2-isopropylmaleate. The chain is 3-isopropylmalate dehydratase small subunit from Ruthia magnifica subsp. Calyptogena magnifica.